We begin with the raw amino-acid sequence, 182 residues long: R-phycoerythrin subunit beta (182 aa).

Cys-82 contacts (2R,3E)-phycoerythrobilin.

It belongs to the phycobiliprotein family. As to quaternary structure, homodimer. In terms of processing, contains one covalently linked phycoerythrobilin chromophore.

Functionally, green-light absorbing phycoerythrin of unknown function. The chain is R-phycoerythrin subunit beta (cpeB) from Prochlorococcus marinus (strain SARG / CCMP1375 / SS120).